The following is a 275-amino-acid chain: Light-independent protochlorophyllide reductase iron-sulfur ATP-binding protein (275 aa).

ATP contacts are provided by residues G12–T17 and K41. S16 contacts Mg(2+). [4Fe-4S] cluster-binding residues include C97 and C131. Residue N182–R183 participates in ATP binding.

It belongs to the NifH/BchL/ChlL family. As to quaternary structure, homodimer. Protochlorophyllide reductase is composed of three subunits; BchL, BchN and BchB. It depends on [4Fe-4S] cluster as a cofactor.

It carries out the reaction chlorophyllide a + oxidized 2[4Fe-4S]-[ferredoxin] + 2 ADP + 2 phosphate = protochlorophyllide a + reduced 2[4Fe-4S]-[ferredoxin] + 2 ATP + 2 H2O. It participates in porphyrin-containing compound metabolism; bacteriochlorophyll biosynthesis (light-independent). Functionally, component of the dark-operative protochlorophyllide reductase (DPOR) that uses Mg-ATP and reduced ferredoxin to reduce ring D of protochlorophyllide (Pchlide) to form chlorophyllide a (Chlide). This reaction is light-independent. The L component serves as a unique electron donor to the NB-component of the complex, and binds Mg-ATP. The protein is Light-independent protochlorophyllide reductase iron-sulfur ATP-binding protein of Prosthecochloris aestuarii (strain DSM 271 / SK 413).